The chain runs to 318 residues: L-lactate dehydrogenase (318 aa).

NAD(+)-binding residues include Val-14, Asp-35, Lys-40, and Tyr-66. Substrate contacts are provided by residues Arg-89 and 121 to 124 (NPVD). Ser-144 provides a ligand contact to NAD(+). Residue 149 to 152 (DTAR) participates in substrate binding. Residue His-176 is the Proton acceptor of the active site. A Phosphotyrosine modification is found at Tyr-220. Thr-229 is a binding site for substrate.

It belongs to the LDH/MDH superfamily. LDH family. As to quaternary structure, homotetramer.

It is found in the cytoplasm. It carries out the reaction (S)-lactate + NAD(+) = pyruvate + NADH + H(+). It functions in the pathway fermentation; pyruvate fermentation to lactate; (S)-lactate from pyruvate: step 1/1. Functionally, catalyzes the conversion of lactate to pyruvate. The sequence is that of L-lactate dehydrogenase from Staphylococcus haemolyticus (strain JCSC1435).